The primary structure comprises 220 residues: Pyridoxine/pyridoxamine 5'-phosphate oxidase (220 aa).

Residues 49–54 (RMVLLK), 68–69 (YT), Lys75, and Gln97 contribute to the FMN site. A substrate-binding site is contributed by Lys54. Substrate contacts are provided by Tyr115, Arg119, and Ser123. FMN-binding positions include 132–133 (QS) and Trp176. 182–184 (RLH) lines the substrate pocket. Arg186 lines the FMN pocket.

The protein belongs to the pyridoxamine 5'-phosphate oxidase family. In terms of assembly, homodimer. It depends on FMN as a cofactor.

It carries out the reaction pyridoxamine 5'-phosphate + O2 + H2O = pyridoxal 5'-phosphate + H2O2 + NH4(+). The catalysed reaction is pyridoxine 5'-phosphate + O2 = pyridoxal 5'-phosphate + H2O2. It participates in cofactor metabolism; pyridoxal 5'-phosphate salvage; pyridoxal 5'-phosphate from pyridoxamine 5'-phosphate: step 1/1. It functions in the pathway cofactor metabolism; pyridoxal 5'-phosphate salvage; pyridoxal 5'-phosphate from pyridoxine 5'-phosphate: step 1/1. Catalyzes the oxidation of either pyridoxine 5'-phosphate (PNP) or pyridoxamine 5'-phosphate (PMP) into pyridoxal 5'-phosphate (PLP). This Paracoccus denitrificans (strain Pd 1222) protein is Pyridoxine/pyridoxamine 5'-phosphate oxidase.